Here is a 283-residue protein sequence, read N- to C-terminus: N-terminal Xaa-Pro-Lys N-methyltransferase 2 (283 aa).

S-adenosyl-L-methionine contacts are provided by residues glycine 124, arginine 129, aspartate 146, 174 to 175 (LQ), and glutamine 190.

Belongs to the methyltransferase superfamily. NTM1 family.

The protein resides in the nucleus. It carries out the reaction N-terminal L-alanyl-L-prolyl-L-lysyl-[protein] + S-adenosyl-L-methionine = N-terminal N-methyl-L-alanyl-L-prolyl-L-lysyl-[protein] + S-adenosyl-L-homocysteine + H(+). The enzyme catalyses N-terminal L-prolyl-L-prolyl-L-lysyl-[protein] + S-adenosyl-L-methionine = N-terminal N-methyl-L-prolyl-L-prolyl-L-lysyl-[protein] + S-adenosyl-L-homocysteine + H(+). It catalyses the reaction N-terminal L-seryl-L-prolyl-L-lysyl-[protein] + S-adenosyl-L-methionine = N-terminal N-methyl-L-seryl-L-prolyl-L-lysyl-[protein] + S-adenosyl-L-homocysteine + H(+). In terms of biological role, alpha N-methyltransferase that methylates the N-terminus of target proteins containing the N-terminal motif [Ala/Pro/Ser]-Pro-Lys when the initiator Met is cleaved. Specifically catalyzes monomethylation of exposed alpha-amino group of Ala or Ser residue in the [Ala/Ser]-Pro-Lys motif and Pro in the Pro-Pro-Lys motif. Predominantly functions as a mono-methyltransferase but is also able to di-/tri-methylate the GPKRIA peptide and di-methylate the PPKRIA peptide (in vitro). May activate NTMT1 by priming its substrates for trimethylation. The chain is N-terminal Xaa-Pro-Lys N-methyltransferase 2 (Ntmt2) from Rattus norvegicus (Rat).